The following is a 118-amino-acid chain: Large ribosomal subunit protein uL24 (118 aa).

The protein belongs to the universal ribosomal protein uL24 family. In terms of assembly, part of the 50S ribosomal subunit.

Functionally, one of two assembly initiator proteins, it binds directly to the 5'-end of the 23S rRNA, where it nucleates assembly of the 50S subunit. In terms of biological role, one of the proteins that surrounds the polypeptide exit tunnel on the outside of the subunit. The protein is Large ribosomal subunit protein uL24 of Prochlorococcus marinus (strain MIT 9215).